The chain runs to 188 residues: Adenine phosphoribosyltransferase (188 aa).

It belongs to the purine/pyrimidine phosphoribosyltransferase family. As to quaternary structure, homodimer.

Its subcellular location is the cytoplasm. It carries out the reaction AMP + diphosphate = 5-phospho-alpha-D-ribose 1-diphosphate + adenine. It participates in purine metabolism; AMP biosynthesis via salvage pathway; AMP from adenine: step 1/1. Catalyzes a salvage reaction resulting in the formation of AMP, that is energically less costly than de novo synthesis. This chain is Adenine phosphoribosyltransferase, found in Paraburkholderia phytofirmans (strain DSM 17436 / LMG 22146 / PsJN) (Burkholderia phytofirmans).